A 111-amino-acid polypeptide reads, in one-letter code: uncharacterized protein (111 aa).

The HIT domain maps to 4–111; it reads IFERIIEGAV…LGGGLLGSIA (108 aa). The Histidine triad motif signature appears at 96-100; sequence HLHIH.

This is an uncharacterized protein from Chlamydia trachomatis serovar D (strain ATCC VR-885 / DSM 19411 / UW-3/Cx).